A 535-amino-acid chain; its full sequence is Estrogen receptor (535 aa).

Positions Ser-1–Thr-21 are disordered. The interval Ser-1–Tyr-104 is modulating. The segment covering Ser-12–Thr-21 has biased composition (polar residues). 2 consecutive NR C4-type zinc fingers follow at residues Cys-105–Cys-125 and Cys-141–Cys-165. The nuclear receptor DNA-binding region spans Cys-105–Met-170. The segment at Val-171 to Met-236 is hinge. Residues Asp-187 to Trp-229 are disordered. Residues Gly-195–Thr-208 show a composition bias toward basic and acidic residues. Low complexity predominate over residues Gly-214–Leu-223. The region spanning Pro-237–His-473 is the NR LBD domain. Positions Pro-478 to Pro-535 are disordered. Over residues Ser-492 to Ser-502 the composition is skewed to low complexity. A compositionally biased stretch (polar residues) spans Gly-525–Pro-535.

This sequence belongs to the nuclear hormone receptor family. NR3 subfamily. In terms of assembly, binds DNA as a homodimer. Can form a heterodimer with ER-beta. As to expression, highest expression in brain and liver.

The protein resides in the nucleus. The steroid hormones and their receptors are involved in the regulation of eukaryotic gene expression and affect cellular proliferation and differentiation in target tissues. This is Estrogen receptor (esr1) from Salmo salar (Atlantic salmon).